The primary structure comprises 803 residues: Early 94 kDa protein (803 aa).

This is Early 94 kDa protein from Lepidoptera (butterflies and moths).